A 293-amino-acid chain; its full sequence is Ribosomal protein L11 methyltransferase (293 aa).

S-adenosyl-L-methionine is bound by residues Thr-145, Gly-166, Asp-188, and Asn-229.

This sequence belongs to the methyltransferase superfamily. PrmA family.

It is found in the cytoplasm. It carries out the reaction L-lysyl-[protein] + 3 S-adenosyl-L-methionine = N(6),N(6),N(6)-trimethyl-L-lysyl-[protein] + 3 S-adenosyl-L-homocysteine + 3 H(+). Its function is as follows. Methylates ribosomal protein L11. The polypeptide is Ribosomal protein L11 methyltransferase (Idiomarina loihiensis (strain ATCC BAA-735 / DSM 15497 / L2-TR)).